The chain runs to 144 residues: Cytochrome c-type biogenesis protein CcmE (144 aa).

Residues 1 to 7 are Cytoplasmic-facing; the sequence is MKPRHKR. A helical; Signal-anchor for type II membrane protein membrane pass occupies residues 8–28; the sequence is ALIIIAALIAIGVAALLILNA. At 29–144 the chain is on the periplasmic side; sequence LNSNIALYVT…DQAQKNGSAK (116 aa). 2 residues coordinate heme: His121 and Tyr125.

The protein belongs to the CcmE/CycJ family.

The protein localises to the cell inner membrane. Functionally, heme chaperone required for the biogenesis of c-type cytochromes. Transiently binds heme delivered by CcmC and transfers the heme to apo-cytochromes in a process facilitated by CcmF and CcmH. The sequence is that of Cytochrome c-type biogenesis protein CcmE from Polynucleobacter necessarius subsp. necessarius (strain STIR1).